We begin with the raw amino-acid sequence, 360 residues long: DNA replication and repair protein RecF (360 aa).

33–40 (GENGSGKT) contributes to the ATP binding site.

This sequence belongs to the RecF family.

It localises to the cytoplasm. Its function is as follows. The RecF protein is involved in DNA metabolism; it is required for DNA replication and normal SOS inducibility. RecF binds preferentially to single-stranded, linear DNA. It also seems to bind ATP. The chain is DNA replication and repair protein RecF from Rickettsia typhi (strain ATCC VR-144 / Wilmington).